Reading from the N-terminus, the 489-residue chain is Beta-1,3-glucosyltransferase (489 aa).

Methionine 1 is a topological domain (cytoplasmic). The helical; Signal-anchor for type II membrane protein transmembrane segment at 2 to 22 (RPPALLALFSCSAAFALMSEE) threads the bilayer. The Lumenal segment spans residues 23–489 (IKEKVTPSQD…ETQKDPREEL (467 aa)). An N-linked (GlcNAc...) asparagine glycan is attached at asparagine 78. The Prevents secretion from ER signature appears at 486 to 489 (REEL).

Belongs to the glycosyltransferase 31 family.

It localises to the endoplasmic reticulum membrane. It participates in protein modification; protein glycosylation. Its function is as follows. O-glucosyltransferase that transfers glucose toward fucose with a beta-1,3 linkage. Specifically glucosylates O-linked fucosylglycan on TSP type-1 domains of proteins, thereby contributing to elongation of O-fucosylglycan. This chain is Beta-1,3-glucosyltransferase, found in Mus musculus (Mouse).